The sequence spans 392 residues: ATP phosphoribosyltransferase regulatory subunit (392 aa).

The protein belongs to the class-II aminoacyl-tRNA synthetase family. HisZ subfamily. As to quaternary structure, heteromultimer composed of HisG and HisZ subunits.

The protein resides in the cytoplasm. It functions in the pathway amino-acid biosynthesis; L-histidine biosynthesis; L-histidine from 5-phospho-alpha-D-ribose 1-diphosphate: step 1/9. Functionally, required for the first step of histidine biosynthesis. May allow the feedback regulation of ATP phosphoribosyltransferase activity by histidine. The polypeptide is ATP phosphoribosyltransferase regulatory subunit (Listeria monocytogenes serotype 4b (strain F2365)).